The sequence spans 582 residues: ATP-dependent lipid A-core flippase (582 aa).

5 helical membrane-spanning segments follow: residues 15–35, 68–88, 140–160, 161–181, and 254–274; these read LWPI…ALVI, YVVV…SYCL, GALI…AVML, YTSW…AVLI, and VQII…VPTI. In terms of domain architecture, ABC transmembrane type-1 spans 27–310; sequence VVSGIALVIN…LTNVNAQFQK (284 aa). An ABC transporter domain is found at 342–578; the sequence is LSFKNVTFTY…NGAYKQLHHI (237 aa). Residue 376–383 coordinates ATP; the sequence is GRSGSGKS.

It belongs to the ABC transporter superfamily. Lipid exporter (TC 3.A.1.106) family. Homodimer.

Its subcellular location is the cell inner membrane. It catalyses the reaction ATP + H2O + lipid A-core oligosaccharideSide 1 = ADP + phosphate + lipid A-core oligosaccharideSide 2.. Involved in lipopolysaccharide (LPS) biosynthesis. Translocates lipid A-core from the inner to the outer leaflet of the inner membrane. Transmembrane domains (TMD) form a pore in the inner membrane and the ATP-binding domain (NBD) is responsible for energy generation. This is ATP-dependent lipid A-core flippase from Pasteurella multocida (strain Pm70).